Reading from the N-terminus, the 329-residue chain is Palmitoyltransferase pfa3 (329 aa).

A run of 5 helical transmembrane segments spans residues 14–34 (VLVI…MSGV), 49–69 (VGII…LTNL), 141–161 (FFFL…YSTF), 177–197 (AIYL…SIVM), and 243–263 (IMGK…GEGV). The 51-residue stretch at 97–147 (RFCEKCQEYKCDRSHHCSQCNKCILRMDHHCMWFKNCVGFRNHKFFFLECF) folds into the DHHC domain.

Belongs to the DHHC palmitoyltransferase family. PFA3 subfamily. In terms of processing, autopalmitoylated.

The protein resides in the vacuole membrane. Its subcellular location is the golgi apparatus membrane. It catalyses the reaction L-cysteinyl-[protein] + hexadecanoyl-CoA = S-hexadecanoyl-L-cysteinyl-[protein] + CoA. In terms of biological role, palmitoyltransferase specific for VAC8. Palmitoylates VAC8 at one or more of its N-terminal cysteine residues, which is required for its proper membrane localization. The chain is Palmitoyltransferase pfa3 (pfa3) from Schizosaccharomyces pombe (strain 972 / ATCC 24843) (Fission yeast).